The following is a 295-amino-acid chain: Cytidine deaminase (295 aa).

CMP/dCMP-type deaminase domains lie at 48-168 (EDSD…FGPA) and 187-295 (DDDE…YLSL). 89–91 (NME) contributes to the substrate binding site. His102 serves as a coordination point for Zn(2+). Catalysis depends on Glu104, which acts as the Proton donor. Positions 129 and 132 each coordinate Zn(2+).

This sequence belongs to the cytidine and deoxycytidylate deaminase family. Homodimer. Zn(2+) serves as cofactor.

The enzyme catalyses cytidine + H2O + H(+) = uridine + NH4(+). It carries out the reaction 2'-deoxycytidine + H2O + H(+) = 2'-deoxyuridine + NH4(+). In terms of biological role, this enzyme scavenges exogenous and endogenous cytidine and 2'-deoxycytidine for UMP synthesis. The chain is Cytidine deaminase from Vibrio cholerae serotype O1 (strain ATCC 39541 / Classical Ogawa 395 / O395).